Reading from the N-terminus, the 77-residue chain is Putative snRNP Sm-like protein (77 aa).

Residues 8 to 77 enclose the Sm domain; the sequence is PTLRMMLDYV…DSVVVITPAA (70 aa).

It belongs to the snRNP Sm proteins family.

This is Putative snRNP Sm-like protein from Aeropyrum pernix (strain ATCC 700893 / DSM 11879 / JCM 9820 / NBRC 100138 / K1).